A 66-amino-acid polypeptide reads, in one-letter code: Protein KleD (66 aa).

The H-T-H motif DNA-binding region spans 33 to 52 (VAVRSGNEWQQVTKWVEPAR).

This chain is Protein KleD (kleD), found in Escherichia coli.